The sequence spans 73 residues: Guanine nucleotide-binding protein G(I)/G(S)/G(O) subunit gamma-11 (73 aa).

The tract at residues 54–73 is disordered; that stretch reads VKGIPEDKNPFKEKGSCIIS. Residue cysteine 70 is modified to Cysteine methyl ester. A lipid anchor (S-farnesyl cysteine) is attached at cysteine 70. The propeptide at 71 to 73 is removed in mature form; that stretch reads IIS.

It belongs to the G protein gamma family. As to quaternary structure, g proteins are composed of 3 units, alpha, beta and gamma. Interacts with beta-1 and beta-3, but not with beta-2.

It localises to the cell membrane. In terms of biological role, guanine nucleotide-binding proteins (G proteins) are involved as a modulator or transducer in various transmembrane signaling systems. The beta and gamma chains are required for the GTPase activity, for replacement of GDP by GTP, and for G protein-effector interaction. The sequence is that of Guanine nucleotide-binding protein G(I)/G(S)/G(O) subunit gamma-11 (GNG11) from Bos taurus (Bovine).